The sequence spans 397 residues: Polyphosphatase (397 aa).

Mg(2+) is bound by residues Asp-41, Asp-127, and His-148. Mn(2+)-binding residues include Asp-41, Asp-127, and His-148. The ATP site is built by His-149, Ser-286, and Arg-381.

Belongs to the PPase class C family. The cofactor is Mn(2+). Mg(2+) is required as a cofactor.

It catalyses the reaction [phosphate](n) + H2O = [phosphate](n-1) + phosphate + H(+). Its function is as follows. Polyphosphatase (polyPase) involved in the degradation of inorganic polyphosphates (polyP) that is able to degrade a range of chains from three to several hundreds of residues in a highly processive manner. Exclusively shows exopolyphosphatase activity, cleaving inside the polyP chain. The polypeptide is Polyphosphatase (Saccharomyces cerevisiae (strain ATCC 204508 / S288c) (Baker's yeast)).